Reading from the N-terminus, the 693-residue chain is Sodium-dependent phosphate transport protein 2B (693 aa).

The disordered stretch occupies residues 1 to 46; it reads MAPWPELENSQPTSEKYTVKADGEQSAKPEKAKETEKDDTGTPITK. Residues 1–89 are Cytoplasmic-facing; that stretch reads MAPWPELENS…KWSERDTKGK (89 aa). Residues 17-40 are compositionally biased toward basic and acidic residues; that stretch reads YTVKADGEQSAKPEKAKETEKDDT. A helical membrane pass occupies residues 90–110; sequence ILCVFQGIGKFILLLVFLYFF. Residues 111-135 lie on the Extracellular side of the membrane; the sequence is VCSLDVLSSAFQLVGGKVAGKFFNN. Residues 136 to 156 traverse the membrane as a helical segment; the sequence is NSIMSNPLAGMVIGVLVTVLV. Over 157-212 the chain is Cytoplasmic; the sequence is QSSSTSTSIVVSMVASSLLPVHAAIPIIMGANIGTSITNTIVALMQAGDRKEFRRA. A helical transmembrane segment spans residues 213-233; it reads FAGATVHDFFNWLSVLVLLPL. The Extracellular portion of the chain corresponds to 234–361; it reads EAATGYLERL…IFVNFNLSDA (128 aa). Cysteines 302 and 349 form a disulfide. N-linked (GlcNAc...) asparagine glycosylation is found at N307 and N320. The chain crosses the membrane as a helical span at residues 362–382; that stretch reads IVGTILLITSLLILCTCLILI. Over 383-408 the chain is Cytoplasmic; it reads VKLLGSVLRGQVAAVIKKTINTDFPY. The chain crosses the membrane as a helical span at residues 409–429; the sequence is PFSWVTGYLAILVGAGMTFIV. Residues 430-485 are Extracellular-facing; that stretch reads QSSSVFTSAMTPLIGIGVISIQRAYPLTLGANIGTTTTAILAALASPGSTLKSSLQ. Residues 486 to 506 traverse the membrane as a helical segment; it reads IALCHFFFNISGIILWYPIPF. Residues 507–525 lie on the Cytoplasmic side of the membrane; the sequence is TRLPIRLAKGLGNISSKYR. Residues 526–546 form a helical membrane-spanning segment; the sequence is WFAIVYLIVFFLLIPLAVFGL. The Extracellular segment spans residues 547-550; that stretch reads SLIG. The helical transmembrane segment at 551–571 threads the bilayer; that stretch reads WPVLVGVASPIVLVILLVVVL. Residues 572–693 are Cytoplasmic-facing; the sequence is KILQSFCPGS…TKIVSSVTAL (122 aa).

The protein belongs to the SLC34A transporter family. Glycosylated.

It is found in the apical cell membrane. It catalyses the reaction 3 Na(+)(out) + phosphate(out) = 3 Na(+)(in) + phosphate(in). Involved in actively transporting phosphate into cells via Na(+) cotransport. This is Sodium-dependent phosphate transport protein 2B (SLC34A2) from Bos taurus (Bovine).